The following is a 478-amino-acid chain: Alpha-1,3-mannosyl-glycoprotein 4-beta-N-acetylglucosaminyltransferase C (478 aa).

Residues 1–23 (MFKFHQVKHIFEILDKMRCLRKR) lie on the Cytoplasmic side of the membrane. A helical; Signal-anchor for type II membrane protein transmembrane segment spans residues 24-44 (FTVSFLGVLVIFLLFMNLYIE). Topologically, residues 45 to 478 (DSYVLEGDKQ…IIRSISIWTS (434 aa)) are lumenal. Asparagine 84, asparagine 215, and asparagine 348 each carry an N-linked (GlcNAc...) asparagine glycan.

This sequence belongs to the glycosyltransferase 54 family. A divalent metal cation is required as a cofactor.

The protein resides in the golgi apparatus membrane. The enzyme catalyses N(4)-{beta-D-GlcNAc-(1-&gt;2)-alpha-D-Man-(1-&gt;3)-[beta-D-GlcNAc-(1-&gt;2)-alpha-D-Man-(1-&gt;6)]-beta-D-Man-(1-&gt;4)-beta-D-GlcNAc-(1-&gt;4)-beta-D-GlcNAc}-L-asparaginyl-[protein] + UDP-N-acetyl-alpha-D-glucosamine = N(4)-{beta-D-GlcNAc-(1-&gt;2)-[beta-D-GlcNAc-(1-&gt;4)]-alpha-D-Man-(1-&gt;3)-[beta-D-GlcNAc-(1-&gt;2)-alpha-D-Man-(1-&gt;6)]-beta-D-Man-(1-&gt;4)-beta-D-GlcNAc-(1-&gt;4)-beta-D-GlcNAc}-L-asparaginyl-[protein] + UDP + H(+). Its pathway is protein modification; protein glycosylation. In terms of biological role, glycosyltransferase that participates in the transfer of N-acetylglucosamine (GlcNAc) to the core mannose residues of N-linked glycans. Catalyzes the formation of the GlcNAcbeta1-4 branch on the GlcNAcbeta1-2Manalpha1-3 arm of the core structure of N-linked glycans. Essential for the production of tri- and tetra-antennary N-linked sugar chains. Does not catalyze the transfer of GlcNAc to the Manalpha1-6 arm to form GlcNAcBeta1-4Manalpha1-6 linkage ('GnT-VI' activity). This chain is Alpha-1,3-mannosyl-glycoprotein 4-beta-N-acetylglucosaminyltransferase C (MGAT4C), found in Sus scrofa (Pig).